Here is a 143-residue protein sequence, read N- to C-terminus: Large ribosomal subunit protein uL15 (143 aa).

Basic residues-rich tracts occupy residues 1-13 and 23-38; these read MIRKSKKITKMRG and KKHRGAGHRGGRGNAG. A disordered region spans residues 1-38; it reads MIRKSKKITKMRGSRTCGYGEAKKHRGAGHRGGRGNAG.

Belongs to the universal ribosomal protein uL15 family. Part of the 50S ribosomal subunit.

Functionally, binds to the 23S rRNA. The protein is Large ribosomal subunit protein uL15 of Methanococcus maripaludis (strain C7 / ATCC BAA-1331).